The chain runs to 140 residues: ATP synthase epsilon chain (140 aa).

Belongs to the ATPase epsilon chain family. F-type ATPases have 2 components, CF(1) - the catalytic core - and CF(0) - the membrane proton channel. CF(1) has five subunits: alpha(3), beta(3), gamma(1), delta(1), epsilon(1). CF(0) has three main subunits: a, b and c.

It is found in the cell inner membrane. Functionally, produces ATP from ADP in the presence of a proton gradient across the membrane. This chain is ATP synthase epsilon chain, found in Neisseria meningitidis serogroup A / serotype 4A (strain DSM 15465 / Z2491).